A 345-amino-acid polypeptide reads, in one-letter code: Arginine-hydroxylase NDUFAF5, mitochondrial (345 aa).

The N-terminal 36 residues, 1–36 (MLRPAGLWRLCRRPWAARVPAENLGRREVTSGVSPR), are a transit peptide targeting the mitochondrion.

It belongs to the methyltransferase superfamily. Interacts with NDUFAF8, leading to stabilize NDUFAF5. Interacts with NDUFS7. Interacts with PYURF (via TRM112 domain); the interaction is direct and stabilizes NDUFAF5 protein.

Its subcellular location is the mitochondrion inner membrane. Functionally, arginine hydroxylase that mediates hydroxylation of 'Arg-111' of NDUFS7 and is involved in the assembly of mitochondrial NADH:ubiquinone oxidoreductase complex (complex I, MT-ND1) at early stages. May also have methyltransferase activity. The polypeptide is Arginine-hydroxylase NDUFAF5, mitochondrial (Homo sapiens (Human)).